A 263-amino-acid chain; its full sequence is H-2 class II histocompatibility antigen, A-S beta chain (263 aa).

Positions 1–27 (MALQIPSLLLSAAVVVLMVLSSPGTEG) are cleaved as a signal peptide. Residues 28–120 (GDSERHFVFQ…VETHTSLRRL (93 aa)) form a beta-1 region. At 28–224 (GDSERHFVFQ…RAQSESARSK (197 aa)) the chain is on the extracellular side. Intrachain disulfides connect Cys-42–Cys-104 and Cys-143–Cys-199. Residue Asn-46 is glycosylated (N-linked (GlcNAc...) asparagine). Positions 121–214 (EQPNVVISLS…SLKSPITVEW (94 aa)) are beta-2. In terms of domain architecture, Ig-like C1-type spans 123-211 (PNVVISLSRT…EHPSLKSPIT (89 aa)). The tract at residues 215–224 (RAQSESARSK) is connecting peptide. Residues 225 to 245 (MLSGIGGCVLGVIFLGLGLFI) traverse the membrane as a helical segment. Residues 246 to 263 (RHRSQKGPRGPPPAGLLQ) lie on the Cytoplasmic side of the membrane.

Belongs to the MHC class II family. In terms of processing, ubiquitinated in immature dendritic cells leading to down-regulation of MHC class II.

It localises to the membrane. In Mus musculus (Mouse), this protein is H-2 class II histocompatibility antigen, A-S beta chain (H2-Ab1).